The sequence spans 313 residues: MLKMESTQQMASSIINTSFEAAVVAATSTLELMGIQYDYNEVYTRVKSKFDYVMDDSGVKNNLLGKAATIDQALNGKFGSAARNRNWMADTRTTARLDEDVNKLRMMLSSKGIDQKMRVLNACFNVKRVPGKSSSIIKCTRLMRDKIERGEVEVDDSFVEEKMEVDTIDWKSRYEQLEKRFESLKQRVNEKYTSWVQKAKKVNENMYSLQNVISQQQSQIADLQNYCNKLEVDLQNKISSLVSSVEWYLKSMELPDEIKTDIEQQLNSIDVINPINAIDDFESLIRNIILDYDRIFLMFKGLMRQCNYEYTYE.

The interval 1–149 (MLKMESTQQM…TRLMRDKIER (149 aa)) is RNA-binding. Residues 150–206 (GEVEVDDSFVEEKMEVDTIDWKSRYEQLEKRFESLKQRVNEKYTSWVQKAKKVNENM) are dimerization. Positions 166–237 (DTIDWKSRYE…NKLEVDLQNK (72 aa)) form a coiled coil. Residues 170 to 234 (WKSRYEQLEK…NYCNKLEVDL (65 aa)) form an interaction with host ZC3H7B region. The interaction with ZC3H7B stretch occupies residues 170-234 (WKSRYEQLEK…NYCNKLEVDL (65 aa)). The segment at 208–313 (SLQNVISQQQ…RQCNYEYTYE (106 aa)) is interaction with host EIF4G1.

The protein belongs to the rotavirus NSP3 family. Homodimer. Interacts (via the coiled-coil region) with host ZC3H7B (via LD motif). Interacts with host EIF4G1.

The protein resides in the host cytoplasm. Functionally, plays an important role in stimulating the translation of viral mRNAs. These mRNAs are capped but not polyadenylated, instead terminating in a conserved sequence 'GACC' at the 3' that is recognized by NSP3, which competes with host PABPC1 for EIF4G1 binding. The interaction between NSP3 and host EIF4G1 stabilizes the EIF4E-EIF4G1 interaction, thereby facilitating the initiation of capped mRNA translation. This Bos taurus (Bovine) protein is Non-structural protein 3.